The sequence spans 357 residues: Phenylalanine--tRNA ligase alpha subunit (357 aa).

Residue E278 coordinates Mg(2+).

Belongs to the class-II aminoacyl-tRNA synthetase family. Phe-tRNA synthetase alpha subunit type 1 subfamily. In terms of assembly, tetramer of two alpha and two beta subunits. It depends on Mg(2+) as a cofactor.

It localises to the cytoplasm. It catalyses the reaction tRNA(Phe) + L-phenylalanine + ATP = L-phenylalanyl-tRNA(Phe) + AMP + diphosphate + H(+). In Albidiferax ferrireducens (strain ATCC BAA-621 / DSM 15236 / T118) (Rhodoferax ferrireducens), this protein is Phenylalanine--tRNA ligase alpha subunit.